The chain runs to 372 residues: Cytochrome b (372 aa).

Helical transmembrane passes span 25 to 45 (FGSM…FLAI), 69 to 90 (WIMQ…YTHI), 105 to 125 (WLSG…GYVL), and 170 to 190 (FFAL…VHII). Residues H75 and H89 each contribute to the heme b site. Heme b-binding residues include H174 and H188. Residue H193 coordinates a ubiquinone. A run of 4 helical transmembrane segments spans residues 218–238 (YKDM…LSFS), 280–300 (LGGT…PFTH), 312–332 (LSQI…WTAS), and 339–358 (FITI…ILTP).

It belongs to the cytochrome b family. In terms of assembly, the cytochrome bc1 complex contains 3 respiratory subunits (MT-CYB, CYC1 and UQCRFS1), 2 core proteins (UQCRC1 and UQCRC2) and probably 6 low-molecular weight proteins. Heme b is required as a cofactor.

The protein resides in the mitochondrion inner membrane. Functionally, component of the ubiquinol-cytochrome c reductase complex (complex III or cytochrome b-c1 complex) that is part of the mitochondrial respiratory chain. The b-c1 complex mediates electron transfer from ubiquinol to cytochrome c. Contributes to the generation of a proton gradient across the mitochondrial membrane that is then used for ATP synthesis. In Naja kaouthia (Monocled cobra), this protein is Cytochrome b (MT-CYB).